A 157-amino-acid polypeptide reads, in one-letter code: MIVSFRPTADLVDSIGVDVRSCDLQFRQFGGCSEFAGPISTVRCFQDNALLKSVLSQTSAGGVLVVDGAGSLHTALVGDVIAELAHSNGWAGLIVNGAVRDAAALRGIDIGIKALGTNPRKSTKIGTGERHVEVNLGGVTFVPGEVVYSDDDGIVVV.

Substrate is bound by residues 78–81 (GDVI) and Arg100. Residue Asp101 participates in a divalent metal cation binding.

The protein belongs to the class II aldolase/RraA-like family. In terms of assembly, homotrimer. A divalent metal cation is required as a cofactor.

It catalyses the reaction 4-hydroxy-4-methyl-2-oxoglutarate = 2 pyruvate. The catalysed reaction is oxaloacetate + H(+) = pyruvate + CO2. Functionally, catalyzes the aldol cleavage of 4-hydroxy-4-methyl-2-oxoglutarate (HMG) into 2 molecules of pyruvate. Also contains a secondary oxaloacetate (OAA) decarboxylase activity due to the common pyruvate enolate transition state formed following C-C bond cleavage in the retro-aldol and decarboxylation reactions. This Mycobacterium leprae (strain Br4923) protein is Putative 4-hydroxy-4-methyl-2-oxoglutarate aldolase.